The primary structure comprises 100 residues: Urease subunit gamma (100 aa).

This sequence belongs to the urease gamma subunit family. Heterotrimer of UreA (gamma), UreB (beta) and UreC (alpha) subunits. Three heterotrimers associate to form the active enzyme.

The protein localises to the cytoplasm. The catalysed reaction is urea + 2 H2O + H(+) = hydrogencarbonate + 2 NH4(+). It participates in nitrogen metabolism; urea degradation; CO(2) and NH(3) from urea (urease route): step 1/1. The protein is Urease subunit gamma of Pseudoalteromonas translucida (strain TAC 125).